We begin with the raw amino-acid sequence, 483 residues long: Probable apyrase 3 (483 aa).

Topologically, residues 1–29 (MTPETDALKVQILPKHQSLPYTVTKAKSK) are cytoplasmic. The helical; Signal-anchor for type II membrane protein transmembrane segment at 30 to 50 (SLILLVVVSVTITLGLLLYVF) threads the bilayer. Residues 51 to 483 (NSNSVISSGS…NGKSRKYLGF (433 aa)) lie on the Extracellular side of the membrane. Position 72–82 (72–82 (VLIDAGSSGTR)) interacts with ATP. Glu-195 (proton acceptor) is an active-site residue. Position 219–229 (219–229 (GIVELGGASAQ)) interacts with ATP. N-linked (GlcNAc...) asparagine glycosylation is found at Asn-250, Asn-281, Asn-305, and Asn-326.

It belongs to the GDA1/CD39 NTPase family. The cofactor is Ca(2+). As to expression, expressed in the initiation zone of lateral root and in the lateral root tip, the adaxial junction of lateral shoots with the stems, and in the abscission zone of flower organs. Not expressed in the rosette leaves.

It localises to the membrane. The enzyme catalyses a ribonucleoside 5'-triphosphate + 2 H2O = a ribonucleoside 5'-phosphate + 2 phosphate + 2 H(+). Catalyzes the hydrolysis of phosphoanhydride bonds of nucleoside tri- and di-phosphates. This is Probable apyrase 3 (APY3) from Arabidopsis thaliana (Mouse-ear cress).